The primary structure comprises 257 residues: Large ribosomal subunit protein uL2 (257 aa).

Positions 207–226 (VEHPFGGGNHQHIGKPSTIR) are disordered.

Belongs to the universal ribosomal protein uL2 family. Component of the large ribosomal subunit.

The protein resides in the cytoplasm. Its function is as follows. Component of the large ribosomal subunit. The ribosome is a large ribonucleoprotein complex responsible for the synthesis of proteins in the cell. The chain is Large ribosomal subunit protein uL2 (rpl8) from Ictalurus punctatus (Channel catfish).